The chain runs to 337 residues: MPSAPQKTKSFRLQTKYVFLTYPRCSSSAENLRDFLWDKLSRFAIFFIAIATELHQDGTPHLHCLIQLDKRSNIRDPSFFDLEGNHPNIQPAKNSEQVLEYISKDGNVITKGEFKKHRVSPSKSDERWRTIIQTATSKEEYLDMIKDEFPHEWATKLQWLEYSANKLFPPQPEIYQATFTEEDLQCHEDLQLWRDQHLYHEPRRAGTRIPSLYICGPSRTGKTTWARSLGRHNYWNGTIDFTVYDDHATYNVIDDIPFKFVPLWKQLIGCQSDFTVNPKYGKKKKIKGGVPCIILCNDDEDWLKNMSPAQIEYFEANCITHFMYAAETFFAPESSSH.

The CRESS-DNA virus Rep endonuclease domain occupies 12–114 (RLQTKYVFLT…DGNVITKGEF (103 aa)). The RCR-1 signature appears at 19–22 (FLTY). A divalent metal cation contacts are provided by Glu-53, His-61, and His-63. The RCR-2 motif lies at 61-63 (HLH). Tyr-101 acts as the For DNA cleavage activity in catalysis. Residues 101 to 104 (YISK) carry the RCR-3 motif. Asp-105 provides a ligand contact to a divalent metal cation. The segment at 163-175 (SANKLFPPQPEIY) is oligomerization. 216 to 223 (GPSRTGKT) serves as a coordination point for ATP. The interval 239-257 (IDFTVYDDHATYNVIDDIP) is transactivation. The short motif at 279–289 (KYGKKKKIKGG) is the Nuclear localization signal element.

Belongs to the geminiviridae Rep protein family. Homooligomer. Rep binds to repeated DNA motifs (iterons). Forms the O-complex, which is a Rep-DNA complex involved in the initiation of RCR. Part of the C- and V-complexes which are RepA-Rep-DNA complexes involved in the c-sense and v-sense transcription. It depends on Mg(2+) as a cofactor. Mn(2+) serves as cofactor.

It localises to the host nucleus. Its function is as follows. Essential for the replication of viral ssDNA. The closed circular ssDNA genome is first converted to a superhelical dsDNA. Rep binds a specific region at the genome origin of replication. It introduces an endonucleolytic nick within the conserved sequence 5'-TAATATTAC-3' in the intergenic region of the genome present in all geminiviruses, thereby initiating the rolling circle replication (RCR). Following cleavage, binds covalently to the 5'-phosphate of DNA as a tyrosyl ester. The cleavage gives rise to a free 3'-OH that serves as a primer for the cellular DNA polymerase. The polymerase synthesizes the (+) strand DNA by rolling circle mechanism. After one round of replication, a Rep-catalyzed nucleotidyl transfer reaction releases a circular single-stranded virus genome, thereby terminating the replication. Displays origin-specific DNA cleavage, nucleotidyl transferase, ATPase and helicase activities. Acts as an inhibitor of C-sense gene transcription. This is Replication-associated protein from Tobacco yellow dwarf virus (strain Australia) (TYDV).